The primary structure comprises 368 residues: DNA replication and repair protein RecF (368 aa).

30 to 37 (GNNAQGKT) lines the ATP pocket.

It belongs to the RecF family.

Its subcellular location is the cytoplasm. The RecF protein is involved in DNA metabolism; it is required for DNA replication and normal SOS inducibility. RecF binds preferentially to single-stranded, linear DNA. It also seems to bind ATP. This Streptococcus pyogenes serotype M5 (strain Manfredo) protein is DNA replication and repair protein RecF.